Reading from the N-terminus, the 265-residue chain is RING finger protein 208 (265 aa).

Positions 83 to 106 (MPTLEGASHTPPLPRRPRKGSSEL) are disordered. At Ser-103 the chain carries Phosphoserine. Residues 147–194 (CPTCGHTYNVTQRRPRVLSCLHSVCEQCLQILYESCPKYKFISCPTCH) form an RING-type zinc finger.

The protein is RING finger protein 208 (Rnf208) of Mus musculus (Mouse).